A 344-amino-acid polypeptide reads, in one-letter code: L-rhamnose-proton symporter (344 aa).

The next 10 helical transmembrane spans lie at 4–24 (PILLGIFWHFIGAASAACFYA), 38–58 (WSLGGFFSWIILPWSISWWLL), 68–88 (FDMATLLPIFLFGAMWGIGNI), 101–121 (MGIGIAIGVTLIIGTLMTPVL), 137–157 (TLLGVLVAVIGVAIVSYAGLL), 175–195 (LILAVMCGIFSAGMSFAMDAA), 214–234 (LPSYVVIMGGGAIVNLGFCFI), 255–275 (LIANALFAILGGVMWYLQFFF), 290–310 (ISWMLHMSFYVLCGGIVGLLF), and 324–344 (LVLGCVVIILAANIVGLGMAV).

It belongs to the L-rhamnose transporter (TC 2.A.7.6) family.

The protein resides in the cell inner membrane. It carries out the reaction L-rhamnopyranose(in) + H(+)(in) = L-rhamnopyranose(out) + H(+)(out). Uptake of L-rhamnose across the cytoplasmic membrane with the concomitant transport of protons into the cell (symport system). The chain is L-rhamnose-proton symporter from Pectobacterium atrosepticum (strain SCRI 1043 / ATCC BAA-672) (Erwinia carotovora subsp. atroseptica).